The chain runs to 482 residues: Methylenetetrahydrofolate--tRNA-(uracil-5-)-methyltransferase TrmFO (482 aa).

11–16 serves as a coordination point for FAD; sequence GGGLAG. A disordered region spans residues 450-482; that stretch reads LRQPSPWSAEDSPRAALPIPEPTPLGPASGSSE.

Belongs to the MnmG family. TrmFO subfamily. The cofactor is FAD.

The protein localises to the cytoplasm. It catalyses the reaction uridine(54) in tRNA + (6R)-5,10-methylene-5,6,7,8-tetrahydrofolate + NADH + H(+) = 5-methyluridine(54) in tRNA + (6S)-5,6,7,8-tetrahydrofolate + NAD(+). The catalysed reaction is uridine(54) in tRNA + (6R)-5,10-methylene-5,6,7,8-tetrahydrofolate + NADPH + H(+) = 5-methyluridine(54) in tRNA + (6S)-5,6,7,8-tetrahydrofolate + NADP(+). Functionally, catalyzes the folate-dependent formation of 5-methyl-uridine at position 54 (M-5-U54) in all tRNAs. The sequence is that of Methylenetetrahydrofolate--tRNA-(uracil-5-)-methyltransferase TrmFO from Rhodospirillum rubrum (strain ATCC 11170 / ATH 1.1.1 / DSM 467 / LMG 4362 / NCIMB 8255 / S1).